Reading from the N-terminus, the 954-residue chain is Glycine dehydrogenase (decarboxylating) (954 aa).

Lysine 706 carries the post-translational modification N6-(pyridoxal phosphate)lysine.

It belongs to the GcvP family. As to quaternary structure, the glycine cleavage system is composed of four proteins: P, T, L and H. Pyridoxal 5'-phosphate serves as cofactor.

The enzyme catalyses N(6)-[(R)-lipoyl]-L-lysyl-[glycine-cleavage complex H protein] + glycine + H(+) = N(6)-[(R)-S(8)-aminomethyldihydrolipoyl]-L-lysyl-[glycine-cleavage complex H protein] + CO2. Its function is as follows. The glycine cleavage system catalyzes the degradation of glycine. The P protein binds the alpha-amino group of glycine through its pyridoxal phosphate cofactor; CO(2) is released and the remaining methylamine moiety is then transferred to the lipoamide cofactor of the H protein. The chain is Glycine dehydrogenase (decarboxylating) from Pseudomonas syringae pv. tomato (strain ATCC BAA-871 / DC3000).